Reading from the N-terminus, the 224-residue chain is Uracil-DNA glycosylase (224 aa).

The Proton acceptor role is filled by aspartate 65.

It belongs to the uracil-DNA glycosylase (UDG) superfamily. UNG family.

It is found in the cytoplasm. The catalysed reaction is Hydrolyzes single-stranded DNA or mismatched double-stranded DNA and polynucleotides, releasing free uracil.. Excises uracil residues from the DNA which can arise as a result of misincorporation of dUMP residues by DNA polymerase or due to deamination of cytosine. This chain is Uracil-DNA glycosylase, found in Buchnera aphidicola subsp. Baizongia pistaciae (strain Bp).